Here is a 231-residue protein sequence, read N- to C-terminus: Phosphatidate cytidylyltransferase (231 aa).

A run of 6 helical transmembrane segments spans residues phenylalanine 33–isoleucine 53, isoleucine 67–leucine 87, tryptophan 95–glycine 115, tryptophan 133–isoleucine 153, isoleucine 167–isoleucine 187, and histidine 206–isoleucine 226.

It belongs to the CDS family.

It localises to the cell membrane. It catalyses the reaction a 1,2-diacyl-sn-glycero-3-phosphate + CTP + H(+) = a CDP-1,2-diacyl-sn-glycerol + diphosphate. It participates in phospholipid metabolism; CDP-diacylglycerol biosynthesis; CDP-diacylglycerol from sn-glycerol 3-phosphate: step 3/3. The sequence is that of Phosphatidate cytidylyltransferase (cdsA) from Rickettsia bellii (strain RML369-C).